The chain runs to 237 residues: Ribosomal RNA small subunit methyltransferase G (237 aa).

S-adenosyl-L-methionine contacts are provided by residues Gly-78, Phe-83, 129–130, and Arg-148; that span reads AE.

This sequence belongs to the methyltransferase superfamily. RNA methyltransferase RsmG family.

The protein resides in the cytoplasm. In terms of biological role, specifically methylates the N7 position of a guanine in 16S rRNA. The chain is Ribosomal RNA small subunit methyltransferase G from Clostridium kluyveri (strain ATCC 8527 / DSM 555 / NBRC 12016 / NCIMB 10680 / K1).